We begin with the raw amino-acid sequence, 177 residues long: PRELI domain-containing protein 2 (177 aa).

Positions 1–175 constitute a PRELI/MSF1 domain; the sequence is MGVTVDVHQV…LLKEQCGSPL (175 aa).

This chain is PRELI domain-containing protein 2 (Prelid2), found in Mus musculus (Mouse).